A 393-amino-acid polypeptide reads, in one-letter code: NAD(P)H-quinone oxidoreductase subunit H, chloroplastic (393 aa).

It belongs to the complex I 49 kDa subunit family. As to quaternary structure, NDH is composed of at least 16 different subunits, 5 of which are encoded in the nucleus.

Its subcellular location is the plastid. The protein localises to the chloroplast thylakoid membrane. The enzyme catalyses a plastoquinone + NADH + (n+1) H(+)(in) = a plastoquinol + NAD(+) + n H(+)(out). The catalysed reaction is a plastoquinone + NADPH + (n+1) H(+)(in) = a plastoquinol + NADP(+) + n H(+)(out). NDH shuttles electrons from NAD(P)H:plastoquinone, via FMN and iron-sulfur (Fe-S) centers, to quinones in the photosynthetic chain and possibly in a chloroplast respiratory chain. The immediate electron acceptor for the enzyme in this species is believed to be plastoquinone. Couples the redox reaction to proton translocation, and thus conserves the redox energy in a proton gradient. This chain is NAD(P)H-quinone oxidoreductase subunit H, chloroplastic, found in Chlorokybus atmophyticus (Soil alga).